The sequence spans 326 residues: Tetraacyldisaccharide 4'-kinase (326 aa).

55 to 62 (TAGGNGKT) provides a ligand contact to ATP.

Belongs to the LpxK family.

It catalyses the reaction a lipid A disaccharide + ATP = a lipid IVA + ADP + H(+). It functions in the pathway glycolipid biosynthesis; lipid IV(A) biosynthesis; lipid IV(A) from (3R)-3-hydroxytetradecanoyl-[acyl-carrier-protein] and UDP-N-acetyl-alpha-D-glucosamine: step 6/6. Functionally, transfers the gamma-phosphate of ATP to the 4'-position of a tetraacyldisaccharide 1-phosphate intermediate (termed DS-1-P) to form tetraacyldisaccharide 1,4'-bis-phosphate (lipid IVA). The polypeptide is Tetraacyldisaccharide 4'-kinase (Klebsiella pneumoniae subsp. pneumoniae (strain ATCC 700721 / MGH 78578)).